The following is a 393-amino-acid chain: NADH-quinone oxidoreductase subunit H 2 (393 aa).

A run of 10 helical transmembrane segments spans residues 13–33 (VLVT…IVLV), 79–99 (AIFW…FAVI), 112–132 (VGLL…ILGG), 158–178 (LAFA…QGIV), 186–206 (VWGI…YIIA), 240–260 (LYFL…VTLF), 278–298 (LNYG…FTLI), 309–329 (VLLG…IPMV), 333–353 (MIGL…MIWF), and 368–388 (IGWK…AVLG).

Belongs to the complex I subunit 1 family. As to quaternary structure, NDH-1 is composed of 14 different subunits. Subunits NuoA, H, J, K, L, M, N constitute the membrane sector of the complex.

It is found in the cell inner membrane. The catalysed reaction is a quinone + NADH + 5 H(+)(in) = a quinol + NAD(+) + 4 H(+)(out). NDH-1 shuttles electrons from NADH, via FMN and iron-sulfur (Fe-S) centers, to quinones in the respiratory chain. The immediate electron acceptor for the enzyme in this species is believed to be ubiquinone. Couples the redox reaction to proton translocation (for every two electrons transferred, four hydrogen ions are translocated across the cytoplasmic membrane), and thus conserves the redox energy in a proton gradient. This subunit may bind ubiquinone. The polypeptide is NADH-quinone oxidoreductase subunit H 2 (Solibacter usitatus (strain Ellin6076)).